The chain runs to 509 residues: Protein disulfide-isomerase (509 aa).

An N-terminal signal peptide occupies residues 1-18 (MLRRAVLCLALAVTAGWA). The Thioredoxin 1 domain occupies 19–135 (WAAEEEDNVL…IVNWLKKRTG (117 aa)). Active-site nucleophile residues include Cys54 and Cys57. Cys54 and Cys57 are disulfide-bonded. 2 positions are modified to N6-succinyllysine: Lys223 and Lys272. A phosphoserine mark is found at Ser332 and Ser358. The Thioredoxin 2 domain occupies 347–476 (FLEGKIKPHL…FKKFLESGGQ (130 aa)). Residues Cys398 and Cys401 each act as nucleophile in the active site. A disulfide bridge links Cys398 with Cys401. A Phosphoserine modification is found at Ser428. The segment at 471–509 (LESGGQDGAGDEDGLEDLEEAEEPDLEEDDDQKAVRDEL) is disordered. Residues 479-501 (AGDEDGLEDLEEAEEPDLEEDDD) are compositionally biased toward acidic residues. Positions 506–509 (RDEL) match the Prevents secretion from ER motif.

It belongs to the protein disulfide isomerase family. In terms of assembly, heterodimer; heterodimerizes with the protein microsomal triglyceride transfer MTTP. Homodimer. Monomers and homotetramers may also occur. Interacts with P4HA2, forming a heterotetramer consisting of 2 alpha subunits (P4HA2) and 2 beta (P4HB), where P4HB plays the role of a structural subunit; this tetramer catalyzes the formation of 4-hydroxyproline in collagen. Also constitutes the structural subunit of the microsomal triacylglycerol transfer protein MTTP in mammalian cells. Stabilizes both enzymes and retain them in the ER without contributing to the catalytic activity. Binds UBQLN1. Interacts with ERO1B. Interacts with ILDR2. Interacts with ERN1/IRE1A (via N-terminus); the interaction is enhanced by phosphorylation of P4HB by FAM20C in response to endoplasmic reticulum stress and results in attenuation of ERN1 activity. Phosphorylation of Ser-358 by FAM20C is induced by endoplasmic reticulum stress and results in a functional switch from oxidoreductase to molecular chaperone. It also promotes interaction with ERN1.

It localises to the endoplasmic reticulum. The protein localises to the endoplasmic reticulum lumen. The protein resides in the melanosome. Its subcellular location is the cell membrane. The catalysed reaction is Catalyzes the rearrangement of -S-S- bonds in proteins.. This multifunctional protein catalyzes the formation, breakage and rearrangement of disulfide bonds. At the cell surface, seems to act as a reductase that cleaves disulfide bonds of proteins attached to the cell. May therefore cause structural modifications of exofacial proteins. Inside the cell, seems to form/rearrange disulfide bonds of nascent proteins. At high concentrations and following phosphorylation by FAM20C, functions as a chaperone that inhibits aggregation of misfolded proteins. At low concentrations, facilitates aggregation (anti-chaperone activity). May be involved with other chaperones in the structural modification of the TG precursor in hormone biogenesis. Also acts as a structural subunit of various enzymes such as prolyl 4-hydroxylase and microsomal triacylglycerol transfer protein MTTP. Receptor for LGALS9; the interaction retains P4HB at the cell surface of Th2 T helper cells, increasing disulfide reductase activity at the plasma membrane, altering the plasma membrane redox state and enhancing cell migration. The chain is Protein disulfide-isomerase (P4HB) from Oryctolagus cuniculus (Rabbit).